We begin with the raw amino-acid sequence, 286 residues long: 33 kDa chaperonin (286 aa).

2 disulfide bridges follow: cysteine 233–cysteine 235 and cysteine 267–cysteine 270.

It belongs to the HSP33 family. Post-translationally, under oxidizing conditions two disulfide bonds are formed involving the reactive cysteines. Under reducing conditions zinc is bound to the reactive cysteines and the protein is inactive.

Its subcellular location is the cytoplasm. In terms of biological role, redox regulated molecular chaperone. Protects both thermally unfolding and oxidatively damaged proteins from irreversible aggregation. Plays an important role in the bacterial defense system toward oxidative stress. This Histophilus somni (strain 2336) (Haemophilus somnus) protein is 33 kDa chaperonin.